The following is a 427-amino-acid chain: Zinc finger protein 2 (427 aa).

Residues 14-85 enclose the KRAB domain; sequence VTFEDVAVTF…GFHGSEEKTW (72 aa). Residues 111 to 142 form a disordered region; sequence HRKQSSLCPKREIQTLTGGPEPEKESPKARTC. C2H2-type zinc fingers lie at residues 169–191, 197–219, 225–247, 253–275, 281–303, 309–331, 337–359, and 365–387; these read QECS…QRTH, YDCP…LMFH, YECD…QRIH, FKCN…QRIH, YECQ…LLTH, YECR…QKVH, YQCS…QKIH, and YECG…QRVH. Residues 393-415 form a C2H2-type 9; degenerate zinc finger; sequence FECSVCGKEFSSKSSIIQHQRRY.

It belongs to the krueppel C2H2-type zinc-finger protein family.

It is found in the nucleus. In terms of biological role, may be involved in transcriptional regulation. This is Zinc finger protein 2 from Mus musculus (Mouse).